The following is a 380-amino-acid chain: DNA replication and repair protein RecF (380 aa).

30–37 (GNNAQGKS) lines the ATP pocket.

It belongs to the RecF family.

It is found in the cytoplasm. In terms of biological role, the RecF protein is involved in DNA metabolism; it is required for DNA replication and normal SOS inducibility. RecF binds preferentially to single-stranded, linear DNA. It also seems to bind ATP. This chain is DNA replication and repair protein RecF, found in Crocosphaera subtropica (strain ATCC 51142 / BH68) (Cyanothece sp. (strain ATCC 51142)).